Reading from the N-terminus, the 87-residue chain is Probable Fe(2+)-trafficking protein (87 aa).

Belongs to the Fe(2+)-trafficking protein family.

Could be a mediator in iron transactions between iron acquisition and iron-requiring processes, such as synthesis and/or repair of Fe-S clusters in biosynthetic enzymes. This chain is Probable Fe(2+)-trafficking protein, found in Francisella tularensis subsp. holarctica (strain FTNF002-00 / FTA).